Here is a 2344-residue protein sequence, read N- to C-terminus: Peroxide stress-activated histidine kinase mak3 (2344 aa).

In terms of domain architecture, Protein kinase spans 1–295 (MYSQHELRNK…GIVNDLEACL (295 aa)). Phosphoserine is present on residues S12, S16, and S17. Over residues 486 to 503 (SGNTRKTSLLGSNHSSYS) the composition is skewed to polar residues. Positions 486–506 (SGNTRKTSLLGSNHSSYSDKL) are disordered. 2 TPR repeats span residues 829–862 (CHYL…IPHE) and 1340–1373 (AFAF…YAAL). Residues 1730–1781 (FELEIRIKRKDGVYRWNLTRCTPTTNEKNRTSFLCATIDIDDQKKARATALE) form the PAC domain. Residues 1792–2018 (NISHELRTPF…TFKICYDLKI (227 aa)) enclose the Histidine kinase domain. The residue at position 1795 (H1795) is a Phosphohistidine; by autocatalysis. The region spanning 2211-2333 (KILIAEDNPI…TLIKMLLQYL (123 aa)) is the Response regulatory domain. The residue at position 2263 (D2263) is a 4-aspartylphosphate.

It is found in the cytoplasm. It catalyses the reaction ATP + protein L-histidine = ADP + protein N-phospho-L-histidine.. Involved in the control of the SAPK-dependent transcriptional response to peroxide stress. Regulates sty1 activity. In Schizosaccharomyces pombe (strain 972 / ATCC 24843) (Fission yeast), this protein is Peroxide stress-activated histidine kinase mak3 (mak3).